The sequence spans 1463 residues: Secretory phospholipase A2 receptor (1463 aa).

The first 20 residues, methionine 1 to alanine 20, serve as a signal peptide directing secretion. Over glutamate 21 to lysine 1392 the chain is Extracellular. Residues lysine 38–tryptophan 115 form the Ricin B-type lectin domain. Asparagine 93 is a glycosylation site (N-linked (GlcNAc...) asparagine). Residues alanine 173–aspartate 221 enclose the Fibronectin type-II domain. Cystine bridges form between cysteine 178/cysteine 204, cysteine 192/cysteine 219, cysteine 260/cysteine 354, cysteine 330/cysteine 346, cysteine 406/cysteine 501, cysteine 478/cysteine 493, cysteine 617/cysteine 634, cysteine 699/cysteine 796, cysteine 774/cysteine 788, cysteine 840/cysteine 938, cysteine 915/cysteine 930, cysteine 992/cysteine 1096, cysteine 1068/cysteine 1088, cysteine 1209/cysteine 1223, cysteine 1280/cysteine 1377, and cysteine 1354/cysteine 1369. C-type lectin domains lie at cysteine 229–valine 353, tyrosine 357–leucine 500, threonine 504–serine 641, proline 646–isoleucine 795, proline 799–isoleucine 937, lysine 941–valine 1095, methionine 1099–alanine 1230, and proline 1235–isoleucine 1376. N-linked (GlcNAc...) asparagine glycosylation is present at asparagine 454. Asparagine 1057 carries N-linked (GlcNAc...) asparagine glycosylation. Residues glycine 1393–tyrosine 1421 traverse the membrane as a helical segment. The Cytoplasmic portion of the chain corresponds to lysine 1422 to glutamine 1463. Residues asparagine 1436–alanine 1442 carry the Endocytosis signal motif.

As to quaternary structure, interacts with sPLA2-IB/PLA2G1B; this interaction mediates intracellular signaling as well as clearance of extracellular sPLA2-IB/PLA2G1B via endocytotic pathway. Interacts with sPLA2-X/PLA2G10; this interaction mediates sPLA2-X/PLA2G10 clearance and inactivation. In terms of processing, the secretory phospholipase A2 receptor form may be produced by the action of metalloproteinases. It contains all extracellular domains and only lacks transmembrane and cytosolic regions. It is however unclear whether this form is produced by proteolytic cleavage as suggested by some experiments, or by alternative splicing.

It localises to the cell membrane. The protein resides in the secreted. Receptor for secretory phospholipase A2 (sPLA2). Also able to bind to snake PA2-like toxins. Although its precise function remains unclear, binding of sPLA2 to its receptor participates in both positive and negative regulation of sPLA2 functions as well as clearance of sPLA2. Binding of sPLA2-IB/PLA2G1B induces various effects depending on the cell type, such as activation of the mitogen-activated protein kinase (MAPK) cascade to induce cell proliferation, the production of lipid mediators, selective release of arachidonic acid in bone marrow-derived mast cells. In neutrophils, binding of sPLA2-IB/PLA2G1B can activate p38 MAPK to stimulate elastase release and cell adhesion. May be involved in responses in pro-inflammatory cytokine productions during endotoxic shock. Also has endocytic properties and rapidly internalizes sPLA2 ligands, which is particularly important for the clearance of extracellular sPLA2s to protect their potent enzymatic activities. The soluble secretory phospholipase A2 receptor form is circulating and acts as a negative regulator of sPLA2 functions by blocking the biological functions of sPLA2-IB/PLA2G1B and sPLA2-X/PLA2G10. The chain is Secretory phospholipase A2 receptor (PLA2R1) from Bos taurus (Bovine).